The primary structure comprises 46 residues: Large ribosomal subunit protein bL33B (46 aa).

This sequence belongs to the bacterial ribosomal protein bL33 family.

The protein is Large ribosomal subunit protein bL33B (rpmG2) of Mycoplasmopsis pulmonis (strain UAB CTIP) (Mycoplasma pulmonis).